The sequence spans 521 residues: GMP synthase [glutamine-hydrolyzing] (521 aa).

The region spanning 8 to 203 (KILILDFGAQ…VVDVCGCQTL (196 aa)) is the Glutamine amidotransferase type-1 domain. Cys85 acts as the Nucleophile in catalysis. Catalysis depends on residues His177 and Glu179. In terms of domain architecture, GMPS ATP-PPase spans 204 to 396 (WTAANIIDDQ…LGLPRTMVYR (193 aa)). 231–237 (SGGVDSS) provides a ligand contact to ATP.

In terms of assembly, homodimer.

The enzyme catalyses XMP + L-glutamine + ATP + H2O = GMP + L-glutamate + AMP + diphosphate + 2 H(+). It functions in the pathway purine metabolism; GMP biosynthesis; GMP from XMP (L-Gln route): step 1/1. Its function is as follows. Catalyzes the synthesis of GMP from XMP. The protein is GMP synthase [glutamine-hydrolyzing] of Xanthomonas campestris pv. campestris (strain B100).